Reading from the N-terminus, the 772-residue chain is DnaJ homolog subfamily C member 16 (772 aa).

The N-terminal stretch at 1-25 (MELKRLGVSWRFLMVLVLILQSLSA) is a signal peptide. Over 26–533 (LDFDPYRVLG…ESLLHSNWRE (508 aa)) the chain is Cytoplasmic. Positions 29–93 (DPYRVLGVSR…EKRTNYDHYG (65 aa)) constitute a J domain. One can recognise a Thioredoxin domain in the interval 119–245 (FDESFFHFPF…LRQFVESLLP (127 aa)). Residues 534 to 554 (MMPLLSLIFSALFILFGTVMV) traverse the membrane as a helical; Anchor for type IV membrane protein segment. Topologically, residues 555 to 772 (QAFSDSNEER…FYIPSWPELD (218 aa)) are extracellular. A disordered region spans residues 560–591 (SNEERESHPADKEEVPEKAGKTEPSFTKESSS). Basic and acidic residues predominate over residues 561–580 (NEERESHPADKEEVPEKAGK). Asn629 carries N-linked (GlcNAc...) asparagine glycosylation.

The protein localises to the endoplasmic reticulum membrane. Functionally, plays an important role in regulating the size of autophagosomes during the formation process. The protein is DnaJ homolog subfamily C member 16 (Dnajc16) of Mus musculus (Mouse).